The chain runs to 555 residues: Solute carrier family 2, facilitated glucose transporter member 10 (555 aa).

Residues 1 to 15 (MGLSSPTLILAATVS) lie on the Cytoplasmic side of the membrane. The helical transmembrane segment at 16–36 (LLGGIVFGYELGIISGALLVL) threads the bilayer. Over 37–48 (KTVYQLTCFEQE) the chain is Extracellular. A helical membrane pass occupies residues 49–69 (ALVSAVLFGALLASLIGGIII). Over 70–82 (DRWGRRTAILASN) the chain is Cytoplasmic. Residues 83 to 103 (LVVLAGSIILIATSTFWWLIV) form a helical membrane-spanning segment. The Extracellular segment spans residues 104–105 (GR). A helical transmembrane segment spans residues 106-126 (VTIGFAISISSMACCIYVSEI). Topologically, residues 127-132 (VRPHQR) are cytoplasmic. A helical transmembrane segment spans residues 133–153 (GMLVSLYETGITVGILISYAM). The Extracellular portion of the chain corresponds to 154-165 (NYFLSGVNESWK). An N-linked (GlcNAc...) asparagine glycan is attached at N161. The helical transmembrane segment at 166–186 (YMFGLAIVPAAFQFISILFLP) threads the bilayer. Topologically, residues 187–240 (SKPHKLNFWEQDTDDGFIELEETGEAGEFKPDTYDRQYTFLDLFRSKDNMRTRT) are cytoplasmic. A helical transmembrane segment spans residues 241–261 (LLGLGLVLFQQFTGQPNVLYY). 250–251 (QQ) is a D-glucose binding site. At 262–277 (ASTIFQSVGFQSNSSA) the chain is on the extracellular side. An N-linked (GlcNAc...) asparagine glycan is attached at N274. The chain crosses the membrane as a helical span at residues 278-298 (VLASVGLGVVKVASTLIAICF). Residues 299-305 (ADKAGRR) lie on the Cytoplasmic side of the membrane. A helical transmembrane segment spans residues 306–326 (ILLLAGCIVMTIAITGIGIVS). The Extracellular segment spans residues 327–415 (FTVKMDSHRD…ASPELPSNYT (89 aa)). 4 N-linked (GlcNAc...) asparagine glycosylation sites follow: N344, N351, N400, and N413. A helical membrane pass occupies residues 416 to 436 (ILNWITLLSMMAFVSAFSIGF). At 437-464 (GPMTWIVLSEIYPADIRGRAFAFCNSFN) the chain is on the cytoplasmic side. Residue W441 coordinates D-glucose. A helical membrane pass occupies residues 465 to 483 (WAANLLITLTFLDVIASIG). At 484–485 (LS) the chain is on the extracellular side. A helical membrane pass occupies residues 486–506 (WTFLLYGVVGLLAIAFIYFFI). At 507-555 (PETKGQSLEEIDKQFSTKRILQKRETSKGVGKRPSSGPPYQRIGKASPS) the chain is on the cytoplasmic side. Residues 528–555 (QKRETSKGVGKRPSSGPPYQRIGKASPS) are disordered.

This sequence belongs to the major facilitator superfamily. Sugar transporter (TC 2.A.1.1) family. Glucose transporter subfamily.

It localises to the endomembrane system. The protein localises to the cytoplasm. Its subcellular location is the perinuclear region. It carries out the reaction D-glucose(out) = D-glucose(in). Its function is as follows. Facilitative glucose transporter required for the development of the cardiovascular system. The sequence is that of Solute carrier family 2, facilitated glucose transporter member 10 from Xenopus tropicalis (Western clawed frog).